Reading from the N-terminus, the 1164-residue chain is DNA-directed RNA polymerase 133 kDa polypeptide (1164 aa).

The protein belongs to the RNA polymerase beta chain family. The DNA-dependent RNA polymerase used for intermediate and late genes expression consists of eight subunits 147 kDa, 133 kDa, 35 kDa, 30 kDa, 22 kDa, 19 kDa, 18 kDa and 7 kDa totalling more than 500 kDa in mass. The same holoenzyme, with the addition of the transcription-specificity factor RAP94, is used for early gene expression.

The protein resides in the virion. It carries out the reaction RNA(n) + a ribonucleoside 5'-triphosphate = RNA(n+1) + diphosphate. Its function is as follows. Part of the DNA-dependent RNA polymerase which catalyzes the transcription of viral DNA into RNA using the four ribonucleoside triphosphates as substrates. Responsible for the transcription of early, intermediate and late genes. DNA-dependent RNA polymerase associates with the early transcription factor (ETF), itself composed of OPG118 and OPG133, thereby allowing the early genes transcription. Late transcription, and probably also intermediate transcription, require newly synthesized RNA polymerase. This Homo sapiens (Human) protein is DNA-directed RNA polymerase 133 kDa polypeptide (OPG151).